We begin with the raw amino-acid sequence, 151 residues long: Ribosomal RNA large subunit methyltransferase H (151 aa).

Residues glycine 100 and leucine 119–phenylalanine 124 each bind S-adenosyl-L-methionine.

Belongs to the RNA methyltransferase RlmH family. In terms of assembly, homodimer.

Its subcellular location is the cytoplasm. It catalyses the reaction pseudouridine(1915) in 23S rRNA + S-adenosyl-L-methionine = N(3)-methylpseudouridine(1915) in 23S rRNA + S-adenosyl-L-homocysteine + H(+). Functionally, specifically methylates the pseudouridine at position 1915 (m3Psi1915) in 23S rRNA. This Thermotoga neapolitana (strain ATCC 49049 / DSM 4359 / NBRC 107923 / NS-E) protein is Ribosomal RNA large subunit methyltransferase H.